Reading from the N-terminus, the 432-residue chain is MLDIKQIRQQPDWFKEKLATRGVQPEEIDTVLELDAKRRELLQQTETLKAKRNEASKKIGEAKRAKQSADEAIAEMRQVGEDIKALDEQVEANDKDLFDKLAHLPNVPHEGVPVSLTEDGAEELRKVGQARQFDFEPKHHWEIGENLGILDFERAGKVSGSRFVYYVGLGAQLERALYNFMLDEHMKEGYTEVLPPYIVNAHAMYGTGQFPKFKQDVYQVNGEDMTLIPTAEVPLTNYFAGEVIPAEKLPVYVTALTPSFRSEAGSAGRDTRGLIRMHQFNKVEMVKYTKQDQSWEELDKMTANAENILQKLGLPYHVITLTTSDMSFTASETHDLELWMPAQNKYREVSSCSNCLDFQARRLHMQYRDENGKLQYVHTLNGSGLAVGRTLAAILENYQNEDGSVTIPEVLVPYFHGITKITKENAVPFNNK.

Position 230–232 (230–232) interacts with L-serine; that stretch reads TAE. Residue 261 to 263 participates in ATP binding; the sequence is RSE. Glu-284 contacts L-serine. Residue 348–351 participates in ATP binding; sequence EVSS. Ser-383 contributes to the L-serine binding site.

Belongs to the class-II aminoacyl-tRNA synthetase family. Type-1 seryl-tRNA synthetase subfamily. As to quaternary structure, homodimer. The tRNA molecule binds across the dimer.

It localises to the cytoplasm. It carries out the reaction tRNA(Ser) + L-serine + ATP = L-seryl-tRNA(Ser) + AMP + diphosphate + H(+). It catalyses the reaction tRNA(Sec) + L-serine + ATP = L-seryl-tRNA(Sec) + AMP + diphosphate + H(+). It functions in the pathway aminoacyl-tRNA biosynthesis; selenocysteinyl-tRNA(Sec) biosynthesis; L-seryl-tRNA(Sec) from L-serine and tRNA(Sec): step 1/1. Its function is as follows. Catalyzes the attachment of serine to tRNA(Ser). Is also able to aminoacylate tRNA(Sec) with serine, to form the misacylated tRNA L-seryl-tRNA(Sec), which will be further converted into selenocysteinyl-tRNA(Sec). The protein is Serine--tRNA ligase of Limosilactobacillus fermentum (strain NBRC 3956 / LMG 18251) (Lactobacillus fermentum).